A 296-amino-acid chain; its full sequence is Protoheme IX farnesyltransferase (296 aa).

Residues 1 to 9 are Cytoplasmic-facing; it reads MMFKQYLQV. Residues 10 to 28 form a helical membrane-spanning segment; sequence TKPGIIFGNLISVIGGFLL. Residues 29–37 are Periplasmic-facing; sequence ASKGSIDYP. The chain crosses the membrane as a helical span at residues 38–56; sequence LFIYTLVGVSLVVASGCVF. The Cytoplasmic segment spans residues 57-78; it reads NNYIDRDIDRKMERTKNRVLVK. Residues 79–97 traverse the membrane as a helical segment; that stretch reads GLISPGVSLVYATLLGIAG. Residues 98-107 lie on the Periplasmic side of the membrane; sequence FMLLWFGANP. The helical transmembrane segment at 108–126 threads the bilayer; sequence LACWLGVMGFVVYVGVYSL. Topologically, residues 127-197 are cytoplasmic; sequence YMKRHSVYGT…YQAANIPVLP (71 aa). A helical membrane pass occupies residues 198–216; sequence VIKGISVAKNHITLYIIAF. Residues 217-228 are Periplasmic-facing; that stretch reads AVATLMLTLGGY. The helical transmembrane segment at 229 to 247 threads the bilayer; it reads AGYKYLVVAAAVSVWWLGM. Topologically, residues 248 to 268 are cytoplasmic; it reads ALRGYKVEDDKVWARKLFGFS. Residues 269 to 287 traverse the membrane as a helical segment; sequence IIAITALSIMMSVDFMVPN. Residues 288 to 296 lie on the Periplasmic side of the membrane; sequence SQNLLTYVW.

This sequence belongs to the UbiA prenyltransferase family. Protoheme IX farnesyltransferase subfamily.

The protein resides in the cell inner membrane. It carries out the reaction heme b + (2E,6E)-farnesyl diphosphate + H2O = Fe(II)-heme o + diphosphate. Its pathway is porphyrin-containing compound metabolism; heme O biosynthesis; heme O from protoheme: step 1/1. Its function is as follows. Converts heme B (protoheme IX) to heme O by substitution of the vinyl group on carbon 2 of heme B porphyrin ring with a hydroxyethyl farnesyl side group. The polypeptide is Protoheme IX farnesyltransferase (Salmonella typhi).